Reading from the N-terminus, the 48-residue chain is Disintegrin leucogastin-A (48 aa).

The Disintegrin domain occupies 1–47; it reads DCASGPCCRDCKFLEEFTICNMARGDDMNDYCNGKTCDCPRNPHKWP. Disulfide bonds link Cys-2–Cys-11, Cys-7–Cys-32, Cys-8–Cys-37, and Cys-20–Cys-39. The Cell attachment site motif lies at 24–26; sequence RGD.

The protein belongs to the venom metalloproteinase (M12B) family. P-II subfamily. P-IIa sub-subfamily. Monomer (disintegrin). In terms of tissue distribution, expressed by the venom gland.

It is found in the secreted. Its function is as follows. Inhibits ADP-induced human platelet aggregation. The chain is Disintegrin leucogastin-A from Echis leucogaster (Roman's saw-scaled viper).